The chain runs to 280 residues: Polyamine aminopropyltransferase (280 aa).

Residues 2–235 enclose the PABS domain; the sequence is GGWIDEEHRG…GWWSWTFAAV (234 aa). S-methyl-5'-thioadenosine is bound at residue Q29. Spermidine is bound by residues H60 and D84. Residues E104 and 136–137 each bind S-methyl-5'-thioadenosine; that span reads DG. D155 (proton acceptor) is an active-site residue. Residue P162 coordinates S-methyl-5'-thioadenosine.

It belongs to the spermidine/spermine synthase family. Homodimer or homotetramer.

It localises to the cytoplasm. It catalyses the reaction S-adenosyl 3-(methylsulfanyl)propylamine + putrescine = S-methyl-5'-thioadenosine + spermidine + H(+). Its pathway is amine and polyamine biosynthesis; spermidine biosynthesis; spermidine from putrescine: step 1/1. Functionally, catalyzes the irreversible transfer of a propylamine group from the amino donor S-adenosylmethioninamine (decarboxy-AdoMet) to putrescine (1,4-diaminobutane) to yield spermidine. The chain is Polyamine aminopropyltransferase from Parasynechococcus marenigrum (strain WH8102).